The sequence spans 313 residues: Homeobox protein knotted-1-like 2 (313 aa).

The tract at residues 13-40 is disordered; the sequence is DPSSAAASSPNPSFSPGGGGGGGVGGGE. Residues 14 to 27 are compositionally biased toward low complexity; sequence PSSAAASSPNPSFS. A compositionally biased stretch (gly residues) spans 28–38; sequence PGGGGGGGVGG. Residues 205–225 enclose the ELK domain; it reads ELKNELKQGYKEKLVDIREEI. Positions 226 to 289 form a DNA-binding region, homeobox; TALE-type; sequence LRKRRAGKLP…NQRKRNWHSN (64 aa). Positions 282–313 are disordered; it reads RKRNWHSNPASSGEKTKKKRNVTGDGGAEQSW.

It belongs to the TALE/KNOX homeobox family. As to expression, isoform 1 is expressed in roots, leaf blades, leaf sheaths and flowers. Isoform 2 is expressed in leaf blades, leaf sheaths and flowers.

Its subcellular location is the nucleus. In Oryza sativa subsp. japonica (Rice), this protein is Homeobox protein knotted-1-like 2 (HOS58).